A 1052-amino-acid polypeptide reads, in one-letter code: Eukaryotic translation initiation factor 3 subunit A (1052 aa).

The stretch at 92-121 (LKKFIELAEKKVTEAQAKADEIQSSLESAA) forms a coiled coil. In terms of domain architecture, PCI spans 339-523 (MTKAASFVLL…GVLTFDTDVF (185 aa)). Residues 580-906 (EARLQAKRAA…AEARRAARRT (327 aa)) are a coiled coil. Composition is skewed to basic and acidic residues over residues 617–632 (AATD…EETR) and 794–901 (KEVS…EARR). 2 disordered regions span residues 617-646 (AATD…AEKQ) and 794-1052 (KEVS…QGGQ). Low complexity-rich tracts occupy residues 905–927 (RTGG…TAPR) and 948–964 (KEAA…AAPE). The span at 1013-1028 (GSSQPPSRTQTPGSSS) shows a compositional bias: polar residues.

The protein belongs to the eIF-3 subunit A family. In terms of assembly, component of the eukaryotic translation initiation factor 3 (eIF-3) complex.

Its subcellular location is the cytoplasm. Its function is as follows. RNA-binding component of the eukaryotic translation initiation factor 3 (eIF-3) complex, which is involved in protein synthesis of a specialized repertoire of mRNAs and, together with other initiation factors, stimulates binding of mRNA and methionyl-tRNAi to the 40S ribosome. The eIF-3 complex specifically targets and initiates translation of a subset of mRNAs involved in cell proliferation. In Aspergillus niger (strain ATCC MYA-4892 / CBS 513.88 / FGSC A1513), this protein is Eukaryotic translation initiation factor 3 subunit A (tif32).